The primary structure comprises 254 residues: Nickel import ATP-binding protein NikD (254 aa).

Residues 2–241 enclose the ABC transporter domain; that stretch reads PQQIELRNIA…PKHAVTRSLV (240 aa). 36–43 serves as a coordination point for ATP; sequence GGSGSGKS.

The protein belongs to the ABC transporter superfamily. Nickel importer (TC 3.A.1.5.3) family. The complex is composed of two ATP-binding proteins (NikD and NikE), two transmembrane proteins (NikB and NikC) and a solute-binding protein (NikA).

Its subcellular location is the cell inner membrane. It carries out the reaction Ni(2+)(out) + ATP + H2O = Ni(2+)(in) + ADP + phosphate + H(+). Functionally, part of the ABC transporter complex NikABCDE involved in nickel import. Responsible for energy coupling to the transport system. In Shigella sonnei (strain Ss046), this protein is Nickel import ATP-binding protein NikD.